The sequence spans 107 residues: U1-lycotoxin-Ls1m (107 aa).

The N-terminal stretch at 1–20 is a signal peptide; the sequence is MMKVLVVVALLVTLISYSSS. Positions 21–41 are excised as a propeptide; it reads EGIDDLEADELLSLMANEQTR. 4 disulfides stabilise this stretch: Cys44-Cys59, Cys51-Cys68, Cys58-Cys86, and Cys70-Cys84.

The protein belongs to the neurotoxin 19 (CSTX) family. 04 (U1-Lctx) subfamily. As to expression, expressed by the venom gland.

It is found in the secreted. This chain is U1-lycotoxin-Ls1m, found in Lycosa singoriensis (Wolf spider).